A 529-amino-acid polypeptide reads, in one-letter code: Lysine--tRNA ligase (529 aa).

Positions 44–52 (PSGLPHIGT) match the 'HIGH' region motif. The 'KMSKS' region signature appears at 290–294 (KISKS). K293 provides a ligand contact to ATP.

Belongs to the class-I aminoacyl-tRNA synthetase family.

It localises to the cytoplasm. The enzyme catalyses tRNA(Lys) + L-lysine + ATP = L-lysyl-tRNA(Lys) + AMP + diphosphate. This is Lysine--tRNA ligase from Rickettsia akari (strain Hartford).